The primary structure comprises 463 residues: Glutamate--tRNA ligase 1 (463 aa).

The 'HIGH' region motif lies at 11–21; sequence PSPTGYLHIGG. Positions 240–244 match the 'KMSKS' region motif; sequence KLSKR. Residue Lys243 participates in ATP binding.

Belongs to the class-I aminoacyl-tRNA synthetase family. Glutamate--tRNA ligase type 1 subfamily. In terms of assembly, monomer.

It localises to the cytoplasm. It catalyses the reaction tRNA(Glu) + L-glutamate + ATP = L-glutamyl-tRNA(Glu) + AMP + diphosphate. In terms of biological role, catalyzes the attachment of glutamate to tRNA(Glu) in a two-step reaction: glutamate is first activated by ATP to form Glu-AMP and then transferred to the acceptor end of tRNA(Glu). The polypeptide is Glutamate--tRNA ligase 1 (Campylobacter jejuni subsp. doylei (strain ATCC BAA-1458 / RM4099 / 269.97)).